The chain runs to 455 residues: Bifunctional protein GlmU (455 aa).

The tract at residues 1-225 (MEVVILAAGQ…IWETLGVNSK (225 aa)) is pyrophosphorylase. UDP-N-acetyl-alpha-D-glucosamine contacts are provided by residues 6–9 (LAAG), Lys20, Gln71, 76–77 (GT), 98–100 (YGD), Gly135, Glu150, Asn165, and Asn223. A Mg(2+)-binding site is contributed by Asp100. A Mg(2+)-binding site is contributed by Asn223. The segment at 226–246 (AQLAELERLHQRNIATRLMED) is linker. An N-acetyltransferase region spans residues 247–455 (GVTLFDPSRI…KRPVKKKAGE (209 aa)). Arg329 and Lys347 together coordinate UDP-N-acetyl-alpha-D-glucosamine. Catalysis depends on His359, which acts as the Proton acceptor. Positions 362 and 373 each coordinate UDP-N-acetyl-alpha-D-glucosamine. Acetyl-CoA is bound by residues Ala376, 382-383 (NY), Ser401, Ala419, and Arg436.

In the N-terminal section; belongs to the N-acetylglucosamine-1-phosphate uridyltransferase family. This sequence in the C-terminal section; belongs to the transferase hexapeptide repeat family. Homotrimer. Mg(2+) is required as a cofactor.

The protein resides in the cytoplasm. The enzyme catalyses alpha-D-glucosamine 1-phosphate + acetyl-CoA = N-acetyl-alpha-D-glucosamine 1-phosphate + CoA + H(+). It carries out the reaction N-acetyl-alpha-D-glucosamine 1-phosphate + UTP + H(+) = UDP-N-acetyl-alpha-D-glucosamine + diphosphate. Its pathway is nucleotide-sugar biosynthesis; UDP-N-acetyl-alpha-D-glucosamine biosynthesis; N-acetyl-alpha-D-glucosamine 1-phosphate from alpha-D-glucosamine 6-phosphate (route II): step 2/2. It functions in the pathway nucleotide-sugar biosynthesis; UDP-N-acetyl-alpha-D-glucosamine biosynthesis; UDP-N-acetyl-alpha-D-glucosamine from N-acetyl-alpha-D-glucosamine 1-phosphate: step 1/1. It participates in bacterial outer membrane biogenesis; LPS lipid A biosynthesis. Functionally, catalyzes the last two sequential reactions in the de novo biosynthetic pathway for UDP-N-acetylglucosamine (UDP-GlcNAc). The C-terminal domain catalyzes the transfer of acetyl group from acetyl coenzyme A to glucosamine-1-phosphate (GlcN-1-P) to produce N-acetylglucosamine-1-phosphate (GlcNAc-1-P), which is converted into UDP-GlcNAc by the transfer of uridine 5-monophosphate (from uridine 5-triphosphate), a reaction catalyzed by the N-terminal domain. The sequence is that of Bifunctional protein GlmU from Aromatoleum aromaticum (strain DSM 19018 / LMG 30748 / EbN1) (Azoarcus sp. (strain EbN1)).